A 178-amino-acid polypeptide reads, in one-letter code: NADH-quinone oxidoreductase subunit B (178 aa).

Positions 45, 46, 111, and 140 each coordinate [4Fe-4S] cluster.

Belongs to the complex I 20 kDa subunit family. NDH-1 is composed of 15 different subunits. Subunits NuoB, C, D, E, F, and G constitute the peripheral sector of the complex. It depends on [4Fe-4S] cluster as a cofactor.

The protein localises to the cell membrane. The catalysed reaction is a quinone + NADH + 5 H(+)(in) = a quinol + NAD(+) + 4 H(+)(out). NDH-1 shuttles electrons from NADH, via FMN and iron-sulfur (Fe-S) centers, to quinones in the respiratory chain. The immediate electron acceptor for the enzyme in this species is believed to be a menaquinone. Couples the redox reaction to proton translocation (for every two electrons transferred, four hydrogen ions are translocated across the cytoplasmic membrane), and thus conserves the redox energy in a proton gradient. The sequence is that of NADH-quinone oxidoreductase subunit B from Deinococcus deserti (strain DSM 17065 / CIP 109153 / LMG 22923 / VCD115).